Reading from the N-terminus, the 120-residue chain is NAD(P)H-quinone oxidoreductase subunit 3, chloroplastic (120 aa).

3 consecutive transmembrane segments (helical) span residues 9 to 29 (IFWA…LISG), 64 to 84 (MFAL…PWAM), and 88 to 108 (VLGV…ILGL).

This sequence belongs to the complex I subunit 3 family. NDH is composed of at least 16 different subunits, 5 of which are encoded in the nucleus.

The protein localises to the plastid. It localises to the chloroplast thylakoid membrane. The catalysed reaction is a plastoquinone + NADH + (n+1) H(+)(in) = a plastoquinol + NAD(+) + n H(+)(out). It catalyses the reaction a plastoquinone + NADPH + (n+1) H(+)(in) = a plastoquinol + NADP(+) + n H(+)(out). In terms of biological role, NDH shuttles electrons from NAD(P)H:plastoquinone, via FMN and iron-sulfur (Fe-S) centers, to quinones in the photosynthetic chain and possibly in a chloroplast respiratory chain. The immediate electron acceptor for the enzyme in this species is believed to be plastoquinone. Couples the redox reaction to proton translocation, and thus conserves the redox energy in a proton gradient. This chain is NAD(P)H-quinone oxidoreductase subunit 3, chloroplastic, found in Arabidopsis thaliana (Mouse-ear cress).